The chain runs to 918 residues: Translation initiation factor IF-2 (918 aa).

The segment at 39–321 (DDASEKHLRN…KRDGRMKETT (283 aa)) is disordered. Low complexity predominate over residues 95–146 (KSSNNESTTRNNNNNKNGNQNRNNTNGRPNNNQNRPNNNRNQNNNRNGNRPN). Residues 148–158 (PKRDEKQDRIR) show a composition bias toward basic and acidic residues. Positions 159 to 174 (ASVAEAARMAAQANRE) are enriched in low complexity. The span at 180 to 190 (PQANRQRTNSA) shows a compositional bias: polar residues. Low complexity-rich tracts occupy residues 201 to 231 (NNQN…NNRN), 237 to 267 (SRPN…TANN), and 278 to 296 (GRNN…QNRP). Residues 302–313 (RKNKKRNRKAKR) are compositionally biased toward basic residues. The tr-type G domain maps to 419 to 588 (SRPPVVTIMG…LLQAEVLELK (170 aa)). The interval 428 to 435 (GHVDHGKT) is G1. Residue 428–435 (GHVDHGKT) participates in GTP binding. The segment at 453-457 (GITQG) is G2. The interval 474 to 477 (DTPG) is G3. GTP contacts are provided by residues 474–478 (DTPGH) and 528–531 (NKID). The G4 stretch occupies residues 528 to 531 (NKID). The interval 564–566 (SAK) is G5.

This sequence belongs to the TRAFAC class translation factor GTPase superfamily. Classic translation factor GTPase family. IF-2 subfamily.

It localises to the cytoplasm. In terms of biological role, one of the essential components for the initiation of protein synthesis. Protects formylmethionyl-tRNA from spontaneous hydrolysis and promotes its binding to the 30S ribosomal subunits. Also involved in the hydrolysis of GTP during the formation of the 70S ribosomal complex. In Pediococcus pentosaceus (strain ATCC 25745 / CCUG 21536 / LMG 10740 / 183-1w), this protein is Translation initiation factor IF-2.